The primary structure comprises 210 residues: MVQSCSAYGCKNRYDKDKPVSFHKFPLTRPSLCKQWEAAVRRKNFKPTKYSSICSEHFTPDCFKRECNNKLLKENAVPTIFLYIEPHEKKEELEPQEQLPSPSPPTSQVDAAVGLLMPPLQTPDNLSVFCDHNYTVEDTMHQRKRILHLEQQVEKLRKKLKTAQQRCRRQERQLEKLKEVVHFQREKDDASERGYVILPNDYFEIVEVPA.

Residues 5–57 form a THAP-type zinc finger; it reads CSAYGCKNRYDKDKPVSFHKFPLTRPSLCKQWEAAVRRKNFKPTKYSSICSEH. The HCFC1-binding motif (HBM) signature appears at 131-134; the sequence is DHNY. A coiled-coil region spans residues 140–187; the sequence is MHQRKRILHLEQQVEKLRKKLKTAQQRCRRQERQLEKLKEVVHFQREK.

The protein belongs to the THAP1 family. As to quaternary structure, interacts with PAWR. Component of a THAP1/THAP3-HCFC1-OGT complex that contains, either THAP1 or THAP3, HCFC1 and OGT. Interacts with OGT. Interacts (via the HBM) with HCFC1 (via the Kelch-repeat domain); the interaction recruits HCFC1 to the RRM1 promoter.

The protein resides in the nucleus. The protein localises to the nucleoplasm. It is found in the PML body. In terms of biological role, DNA-binding transcription regulator that regulates endothelial cell proliferation and G1/S cell-cycle progression. Specifically binds the 5'-[AT]NTNN[GT]GGCA[AGT]-3' core DNA sequence and acts by modulating expression of pRB-E2F cell-cycle target genes, including RRM1. May also have pro-apoptotic activity by potentiating both serum-withdrawal and TNF-induced apoptosis. In Rattus norvegicus (Rat), this protein is THAP domain-containing protein 1 (Thap1).